A 511-amino-acid chain; its full sequence is NAD(P)H-quinone oxidoreductase subunit 2 B, chloroplastic (511 aa).

13 helical membrane-spanning segments follow: residues 24–44 (LLLF…GLIL), 57–77 (IPWL…ALLF), 99–119 (IFQF…VEYI), 124–144 (MAIT…MFLC), 149–169 (LITI…LSGY), 183–203 (YLLM…WLYG), 227–247 (PGIS…LSPA), 295–315 (WHLL…LIAI), 323–343 (MLAY…IVGD), 354–374 (YMLF…LFGL), 395–415 (ALSL…AGFF), 418–438 (LHLF…IGLL), and 484–504 (MIVC…IIAI).

Belongs to the complex I subunit 2 family. As to quaternary structure, NDH is composed of at least 16 different subunits, 5 of which are encoded in the nucleus.

The protein resides in the plastid. It is found in the chloroplast thylakoid membrane. The catalysed reaction is a plastoquinone + NADH + (n+1) H(+)(in) = a plastoquinol + NAD(+) + n H(+)(out). It carries out the reaction a plastoquinone + NADPH + (n+1) H(+)(in) = a plastoquinol + NADP(+) + n H(+)(out). NDH shuttles electrons from NAD(P)H:plastoquinone, via FMN and iron-sulfur (Fe-S) centers, to quinones in the photosynthetic chain and possibly in a chloroplast respiratory chain. The immediate electron acceptor for the enzyme in this species is believed to be plastoquinone. Couples the redox reaction to proton translocation, and thus conserves the redox energy in a proton gradient. The chain is NAD(P)H-quinone oxidoreductase subunit 2 B, chloroplastic from Nandina domestica (Heavenly bamboo).